The primary structure comprises 563 residues: MYDRAPRWLDLANRGSTEEHVGPGTYQVPFPKQQATGCYAPFLSLSSKKDAYVVSSDPGKAVPGPAHYNVSQAQYKIKGGRTLQNREKRFKKLISDGPGPASYDCPYLGTLCIRIRQKICRKPAVSRSLDIPSIPSSGKSHGYHLNEDDTIMRRTPPSSDKTMGPAYYNPQFDYPKASLKYKGVNFGIATGRQELLKYSGPGPGHYDIIQKRKLRYENINIKRDQEHYCYSYVPRLYEEIALQEEKKGVPGPGKYNIKSQFDHIKSMSTIVDASSLLFFPETERFEPIKSSTPAPGTYNETRTAFKVPKKRSGLFSPFGQRAARFTEDYKAHELPGPGFYDISTNIVKAQVKKPHLKKKMKTGFGSSVPRALFAVQEKAFAGPGPSDYQVVRGIHDELPNLMNKYAAFLSREERTTPVQEMSLPAPGCYDVQKSYDMSQVQHNYMPPRSSVAKQRHSSFLSAAPRCLGKISDGPGPATYNPILMKSGAIISFVKAPRRFEEFQDKFSPGPTTYELSPFFRHSLLKRTYNVTLPCSASLNREHAGHAVQKTRQKYQRERFKHPN.

3 STPGR repeats span residues 21–34 (VGPG…PKQQ), 63–73 (PGPAHYNVSQA), and 97–107 (GPGPASYDCPY). The disordered stretch occupies residues 131–163 (IPSIPSSGKSHGYHLNEDDTIMRRTPPSSDKTM). STPGR repeat units follow at residues 200-219 (GPGP…YENI), 250-263 (PGPG…QFDH), 292-321 (TPAP…FGQR), 334-353 (LPGP…QVKK), 423-438 (LPAP…YDMS), 473-483 (GPGPATYNPIL), and 507-518 (SPGPTTYELSPF).

The sequence is that of Sperm-tail PG-rich repeat-containing protein 2 (Stpg2) from Rattus norvegicus (Rat).